The following is a 275-amino-acid chain: Putative ABC transporter permease protein ORF2 (275 aa).

6 consecutive transmembrane segments (helical) span residues 11–31 (YFIFLAVWTLIADVPFLFMLF), 74–94 (IAVSISVVLILIISSMAAFAF), 108–128 (LIIAGMAIPIHVTLIPIYVLT), 136–156 (TVFALIGPYVALSLPMSIFIL), 185–205 (ILLPLSAPALITVGIYNGTYL), and 239–259 (IPAIMAFLTLSLLPMLIAYIF). Positions 69 to 260 (LKNSVIAVSI…LPMLIAYIFG (192 aa)) constitute an ABC transmembrane type-1 domain.

Belongs to the binding-protein-dependent transport system permease family. MalFG subfamily.

Its subcellular location is the cell membrane. The sequence is that of Putative ABC transporter permease protein ORF2 from Caldicellulosiruptor sp. (strain Rt8B.4).